Reading from the N-terminus, the 458-residue chain is Bifunctional protein GlmU (458 aa).

The segment at 1–224 (MTVIALAAGK…PKVAVGVNNQ (224 aa)) is pyrophosphorylase. UDP-N-acetyl-alpha-D-glucosamine-binding positions include 6-9 (LAAG), Lys-20, Gln-71, and 76-77 (GT). Asp-99 provides a ligand contact to Mg(2+). The UDP-N-acetyl-alpha-D-glucosamine site is built by Gly-136, Glu-150, Asn-165, and Asn-222. Mg(2+) is bound at residue Asn-222. The tract at residues 225 to 245 (LELARATRLLFKRKALRLMED) is linker. An N-acetyltransferase region spans residues 246 to 458 (GVLMIDPRTV…TAETEEKEQV (213 aa)). Arg-328 and Lys-346 together coordinate UDP-N-acetyl-alpha-D-glucosamine. The active-site Proton acceptor is His-358. UDP-N-acetyl-alpha-D-glucosamine contacts are provided by Tyr-361 and Asn-372. Acetyl-CoA is bound by residues 381 to 382 (NY), Ser-401, Ser-419, and Arg-436.

In the N-terminal section; belongs to the N-acetylglucosamine-1-phosphate uridyltransferase family. This sequence in the C-terminal section; belongs to the transferase hexapeptide repeat family. Homotrimer. Mg(2+) is required as a cofactor.

The protein resides in the cytoplasm. It catalyses the reaction alpha-D-glucosamine 1-phosphate + acetyl-CoA = N-acetyl-alpha-D-glucosamine 1-phosphate + CoA + H(+). The enzyme catalyses N-acetyl-alpha-D-glucosamine 1-phosphate + UTP + H(+) = UDP-N-acetyl-alpha-D-glucosamine + diphosphate. It participates in nucleotide-sugar biosynthesis; UDP-N-acetyl-alpha-D-glucosamine biosynthesis; N-acetyl-alpha-D-glucosamine 1-phosphate from alpha-D-glucosamine 6-phosphate (route II): step 2/2. The protein operates within nucleotide-sugar biosynthesis; UDP-N-acetyl-alpha-D-glucosamine biosynthesis; UDP-N-acetyl-alpha-D-glucosamine from N-acetyl-alpha-D-glucosamine 1-phosphate: step 1/1. Its pathway is bacterial outer membrane biogenesis; LPS lipid A biosynthesis. Catalyzes the last two sequential reactions in the de novo biosynthetic pathway for UDP-N-acetylglucosamine (UDP-GlcNAc). The C-terminal domain catalyzes the transfer of acetyl group from acetyl coenzyme A to glucosamine-1-phosphate (GlcN-1-P) to produce N-acetylglucosamine-1-phosphate (GlcNAc-1-P), which is converted into UDP-GlcNAc by the transfer of uridine 5-monophosphate (from uridine 5-triphosphate), a reaction catalyzed by the N-terminal domain. The protein is Bifunctional protein GlmU of Bdellovibrio bacteriovorus (strain ATCC 15356 / DSM 50701 / NCIMB 9529 / HD100).